The chain runs to 694 residues: DNA-binding protein RFX2 (694 aa).

A DNA-binding region (RFX-type winged-helix) is located at residues 174 to 249; sequence HLQWLLDNYE…YHYYGIRLKP (76 aa). Disordered stretches follow at residues 267-310 and 658-694; these read QQPI…QHHQ and KDDV…MQEM. Positions 289 to 299 are enriched in polar residues; sequence PANSSQHASPE. The span at 300–310 shows a compositional bias: low complexity; it reads QSVAAQSQHHQ.

This sequence belongs to the RFX family. As to quaternary structure, homodimer. Heterodimer; heterodimerizes with other rfx proteins. As to expression, preferentially expressed in ciliated tissues, such as neural tube, gastrocoel roof plate, epidermal multiciliated cells, otic vesicles and kidneys.

It localises to the nucleus. The protein localises to the cytoplasm. Functionally, transcription factor that acts as a key regulator of ciliogenesis. Specifically regulates expression of genes required for cilium assembly and function. Recognizes and binds the X-box, a regulatory motif with DNA sequence 5'-GTNRCC(0-3N)RGYAAC-3' present on promoters. Required for neural tube closure and neural ciliogenesis. The protein is DNA-binding protein RFX2 (rfx2) of Xenopus laevis (African clawed frog).